A 92-amino-acid polypeptide reads, in one-letter code: Small ribosomal subunit protein uS19c (92 aa).

The protein belongs to the universal ribosomal protein uS19 family.

The protein resides in the plastid. It is found in the chloroplast. In terms of biological role, protein S19 forms a complex with S13 that binds strongly to the 16S ribosomal RNA. This Thalassiosira pseudonana (Marine diatom) protein is Small ribosomal subunit protein uS19c.